Consider the following 139-residue polypeptide: I-Kappa-B like protein N1 (139 aa).

3 ANK repeats span residues 16–48 (NGENLLHAMCRHGNSLALSIIAQSINKNYQYLL), 54–87 (EGRKCIHIAAVMHKGQVATELIIILLNFGADVNG), and 92–122 (TGDTVLHIAVYLKDYYLAEWLCRRSGININA).

It belongs to the polydnaviridae I-Kappa-B-like protein family.

Functionally, suppresses the host immune response through NF-kappa-B inactivation. Possesses ankyrin repeat domain required for NF-kappa-B binding but lack the regulatory regions required for dissociation from NF-kappa-B and degradation. Therefore, prevents host NF-kappa-B release and subsequent activation. This chain is I-Kappa-B like protein N1 (N2), found in Microplitis demolitor bracovirus (isolate Webb) (MdBV).